Reading from the N-terminus, the 101-residue chain is MKQVLTWLVRGYQRFISPLLPPSCRYYPTCSTYMIQALQKHGAIKGSLMGIARILRCNPFVKGGLDPVPAFFTLRRNPHPENDLDLSDIQNLNHKLGGRHG.

It belongs to the UPF0161 family.

The protein localises to the cell membrane. Could be involved in insertion of integral membrane proteins into the membrane. This Lacticaseibacillus casei (strain BL23) (Lactobacillus casei) protein is Putative membrane protein insertion efficiency factor.